We begin with the raw amino-acid sequence, 115 residues long: Large ribosomal subunit protein bL19 (115 aa).

Belongs to the bacterial ribosomal protein bL19 family.

Its function is as follows. This protein is located at the 30S-50S ribosomal subunit interface and may play a role in the structure and function of the aminoacyl-tRNA binding site. This Aeromonas hydrophila subsp. hydrophila (strain ATCC 7966 / DSM 30187 / BCRC 13018 / CCUG 14551 / JCM 1027 / KCTC 2358 / NCIMB 9240 / NCTC 8049) protein is Large ribosomal subunit protein bL19.